Here is a 246-residue protein sequence, read N- to C-terminus: Mast cell protease 2 (246 aa).

A signal peptide spans 1 to 19 (MHRPPLPLVLLLLCCRAQA). A propeptide spans 20–21 (GE) (activation peptide). Residues 22 to 244 (IIGGTESKPH…YRPWIDEVLK (223 aa)) form the Peptidase S1 domain. A disulfide bridge links Cys-51 with Cys-67. Active-site charge relay system residues include His-66 and Asp-109. N-linked (GlcNAc...) asparagine glycosylation occurs at Asn-120. Cystine bridges form between Cys-143–Cys-208 and Cys-174–Cys-187. Ser-202 serves as the catalytic Charge relay system.

It belongs to the peptidase S1 family. Granzyme subfamily.

The protein resides in the secreted. The protein localises to the cytoplasmic granule. In terms of biological role, putative mast cell chymase. The chain is Mast cell protease 2 from Ovis aries (Sheep).